We begin with the raw amino-acid sequence, 76 residues long: Putative small nuclear ribonucleoprotein G-like protein 15 (76 aa).

Positions 4–76 constitute a Sm domain; the sequence is AHPPELKKFT…IIMLEALERV (73 aa).

Belongs to the snRNP Sm proteins family.

Its subcellular location is the nucleus. Its function is as follows. Associated with snRNP U1, U2, U4/U6 and U5. This is Putative small nuclear ribonucleoprotein G-like protein 15 (SNRPGP15) from Homo sapiens (Human).